Here is an 883-residue protein sequence, read N- to C-terminus: Probable valine--tRNA ligase, cytoplasmic (883 aa).

Over residues 1-23 (MTLKMDRKALKEEKKKQKLEKFL) the composition is skewed to basic and acidic residues. Positions 1 to 49 (MTLKMDRKALKEEKKKQKLEKFLNKKTTQSKISKAPKPAKNKSSSGYDP) are disordered. The span at 30 to 45 (SKISKAPKPAKNKSSS) shows a compositional bias: low complexity. The short motif at 82-92 (PNITGSLHIGH) is the 'HIGH' region element. The 'KMSKS' region motif lies at 586 to 590 (KMSKS). Lysine 589 serves as a coordination point for ATP.

The protein belongs to the class-I aminoacyl-tRNA synthetase family.

It is found in the cytoplasm. It catalyses the reaction tRNA(Val) + L-valine + ATP = L-valyl-tRNA(Val) + AMP + diphosphate. This chain is Probable valine--tRNA ligase, cytoplasmic, found in Vairimorpha ceranae (strain BRL01) (Microsporidian parasite).